The following is a 259-amino-acid chain: Diaminopimelate epimerase (259 aa).

Residues Asn14, Gln42, and Asn60 each coordinate substrate. Cys69 acts as the Proton donor in catalysis. Substrate-binding positions include 70-71 (GN), Asn151, Asn184, and 202-203 (ER). The active-site Proton acceptor is the Cys211. 212 to 213 (GS) contributes to the substrate binding site.

It belongs to the diaminopimelate epimerase family. As to quaternary structure, homodimer.

The protein resides in the cytoplasm. It catalyses the reaction (2S,6S)-2,6-diaminopimelate = meso-2,6-diaminopimelate. It functions in the pathway amino-acid biosynthesis; L-lysine biosynthesis via DAP pathway; DL-2,6-diaminopimelate from LL-2,6-diaminopimelate: step 1/1. In terms of biological role, catalyzes the stereoinversion of LL-2,6-diaminopimelate (L,L-DAP) to meso-diaminopimelate (meso-DAP), a precursor of L-lysine and an essential component of the bacterial peptidoglycan. The sequence is that of Diaminopimelate epimerase from Wolbachia sp. subsp. Brugia malayi (strain TRS).